Reading from the N-terminus, the 302-residue chain is N-acetyl-D-glucosamine kinase (302 aa).

ATP is bound by residues Gly-4–Lys-11 and Gly-133–Tyr-140. Zn(2+) contacts are provided by His-157, Cys-177, Cys-179, and Cys-184.

This sequence belongs to the ROK (NagC/XylR) family. NagK subfamily.

The catalysed reaction is N-acetyl-D-glucosamine + ATP = N-acetyl-D-glucosamine 6-phosphate + ADP + H(+). It participates in cell wall biogenesis; peptidoglycan recycling. Its function is as follows. Catalyzes the phosphorylation of N-acetyl-D-glucosamine (GlcNAc) derived from cell-wall degradation, yielding GlcNAc-6-P. The chain is N-acetyl-D-glucosamine kinase from Vibrio parahaemolyticus serotype O3:K6 (strain RIMD 2210633).